The chain runs to 180 residues: Lipid droplet coating protein Cap20 (180 aa).

The protein belongs to the perilipin family. As to quaternary structure, interacts with class I hydrophobin Hydr1. Interacts also with the cAMP-dependent protein kinase catalytic subunit PkaC1.

The protein localises to the lipid droplet. Its function is as follows. Lipid droplet coating protein that regulates lipid metabolism, appressorial turgor pressure, and virulence. Mature appressoria with high turgor pressure are essential to penetrate the leaf surface. In Colletotrichum siamense (Anthracnose fungus), this protein is Lipid droplet coating protein Cap20.